Here is a 927-residue protein sequence, read N- to C-terminus: Heat shock protein hsp98 (927 aa).

The Clp R domain occupies 2 to 162 (TSKMEFTDRA…TDAIQAIRGT (161 aa)). Repeat stretches follow at residues 7-87 (FTDR…LVRL) and 99-162 (MAPS…IRGT). Positions 179 to 428 (LAKFTIDMTA…AVRVARESQP (250 aa)) are NBD1. Position 224–231 (224–231 (GEPGVGKT)) interacts with ATP. A coiled-coil region spans residues 429–553 (EIIDSLERKL…AALNAAAAET (125 aa)). The tract at residues 454 to 473 (EASKARLEQAKKDAENVEEE) is disordered. Residues 562 to 752 (VGPDQINEIV…IVVMTSNLGA (191 aa)) are NBD2. 635–642 (GPSGTGKT) serves as a coordination point for ATP. A disordered region spans residues 908–927 (EDAVDEVAPESEMDEDLYDD).

Belongs to the ClpA/ClpB family. Homohexamer, forming a ring with a central pore.

It is found in the cytoplasm. Its subcellular location is the nucleus. Required, in concert with Hsp40 and Hsp70 and small Hsps, for the dissociation, resolubilization and refolding of aggregates of damaged proteins after heat or other environmental stresses. Extracts proteins from aggregates by unfolding and threading them in an ATP-dependent process through the axial channel of the protein hexamer, after which they can be refolded by components of the Hsp70/Hsp40 chaperone system. In Neurospora crassa (strain ATCC 24698 / 74-OR23-1A / CBS 708.71 / DSM 1257 / FGSC 987), this protein is Heat shock protein hsp98 (hsp98).